The chain runs to 755 residues: Cartilage oligomeric matrix protein (755 aa).

Residues 1–19 (MGPTACVLVLALAILRATG) form the signal peptide. The tract at residues 21–84 (GQIPLGGDLA…PARTPGLSVR (64 aa)) is COMP N-terminal. An EGF-like 1 domain is found at 85–124 (PVPLCAPGSCFPGVVCSETATGARCGPCPPGYTGNGSHCT). 21 disulfides stabilise this stretch: C89–C100, C94–C109, C112–C123, C129–C140, C134–C149, C152–C176, C182–C195, C189–C204, C207–C219, C227–C241, C235–C251, C253–C264, C280–C285, C290–C310, C326–C346, C349–C369, C385–C405, C408–C428, C446–C466, C482–C502, and C518–C739. N119 is a glycosylation site (N-linked (GlcNAc...) asparagine). In terms of domain architecture, EGF-like 2; calcium-binding spans 125 to 177 (DVNECNAHPCFPRVRCINTSPGFHCEACPPGFSGPTHEGVGLTFAKSNKQVCT). The region spanning 178–220 (DINECETGQHNCVPNSVCVNTRGSFQCGPCQPGFVGDQTSGCQ) is the EGF-like 3; calcium-binding domain. The EGF-like 4 domain maps to 223–265 (GQHFCPDGSPSPCHEKANCVLERDGSRSCVCAVGWAGNGLLCG). TSP type-3 repeat units lie at residues 266-298 (RDTD…NSGQ), 299-334 (EDVD…NPDQ), 335-357 (RNSD…NDDQ), 358-393 (KDTD…NFDQ), 394-416 (SDSD…NPDQ), 417-454 (RDVD…NSAQ), 455-490 (QDSD…NPGQ), and 491-526 (EDND…EVTL). 2 disordered regions span residues 296-341 (SGQE…DSDK) and 353-501 (KNDD…VGDA). Composition is skewed to basic and acidic residues over residues 332–341 (PDQRNSDSDK) and 353–368 (KNDD…RGDA). Position 394 is a phosphoserine (S394). 2 stretches are compositionally biased toward basic and acidic residues: residues 412 to 424 (DNPD…HDFV) and 456 to 465 (DSDHDGKGDA). The tract at residues 525–755 (TLTDFRAFQT…DYESHRLQRV (231 aa)) is mediates cell survival and induction of the IAP family of survival proteins. The TSP C-terminal domain occupies 530–744 (RAFQTVVLDP…LRYRCNDTIP (215 aa)). N-linked (GlcNAc...) asparagine glycosylation occurs at N740.

This sequence belongs to the thrombospondin family. Pentamer; disulfide-linked. Exists in a more compact conformation in the presence of calcium and shows a more extended conformation in the absence of calcium. Interacts with ITGB3, ITGA5 and FN1. Binding to FN1 requires the presence of divalent cations (Ca(2+), Mg(2+) or Mn(2+)). The greatest amount of binding is seen in the presence of Mn(2+). Interacts with MATN1, MATN3, MATN4 and ACAN. Binds heparin, heparan sulfate and chondroitin sulfate. EDTA dimishes significantly its binding to ACAN and abolishes its binding to MATN3, MATN4 and chondroitin sulfate. Interacts with collagen I, II and IX, and interaction with these collagens is dependent on the presence of zinc ions. Interacts with ADAMTS12. Interacts with ITGA7. Ca(2+) serves as cofactor. In terms of processing, proteolytically cleaved by metalloproteases ADAMTS4 and ADAMTS1 with ADAMTS4 showing more potent activity. As to expression, expressed in cartilage, including nasal, knee epiphyseal and rib tissues. Abundantly expressed in chondrocyte and tendon extracellular matrix (at protein level).

The protein resides in the secreted. The protein localises to the extracellular space. It localises to the extracellular matrix. In terms of biological role, plays a role in the structural integrity of cartilage via its interaction with other extracellular matrix proteins such as the collagens and fibronectin. Can mediate the interaction of chondrocytes with the cartilage extracellular matrix through interaction with cell surface integrin receptors. Could play a role in the pathogenesis of osteoarthritis. Potent suppressor of apoptosis in both primary chondrocytes and transformed cells. Suppresses apoptosis by blocking the activation of caspase-3 and by inducing the IAP family of survival proteins (BIRC3, BIRC2, BIRC5 and XIAP). Essential for maintaining a vascular smooth muscle cells (VSMCs) contractile/differentiated phenotype under physiological and pathological stimuli. Maintains this phenotype of VSMCs by interacting with ITGA7. This chain is Cartilage oligomeric matrix protein, found in Mus musculus (Mouse).